The chain runs to 212 residues: MQGYFITFEGPDGAGKTTVINEVVKAIQGQCKREILVTREPGGSKIAEKIRDIILDPANTEMNAKTEALLYAASRSQHVSEIINPALKRGDLVMSDRFVDSSLAYQGQGRGLGIDEVAQINAFATGHLEPDLTIFLDLDPAQGLARIAKVRSGSEDRLEQEKLAFHEEVYRGYQKVNQAHPDRVKVVDASQDLPQVVAASVKLVKSTFPELF.

10–17 (GPDGAGKT) serves as a coordination point for ATP.

Belongs to the thymidylate kinase family.

The enzyme catalyses dTMP + ATP = dTDP + ADP. Functionally, phosphorylation of dTMP to form dTDP in both de novo and salvage pathways of dTTP synthesis. The chain is Thymidylate kinase from Lactobacillus delbrueckii subsp. bulgaricus (strain ATCC 11842 / DSM 20081 / BCRC 10696 / JCM 1002 / NBRC 13953 / NCIMB 11778 / NCTC 12712 / WDCM 00102 / Lb 14).